The following is a 416-amino-acid chain: Serine/threonine transporter SstT (416 aa).

9 consecutive transmembrane segments (helical) span residues 15–35, 49–69, 82–102, 141–161, 192–212, 217–237, 288–308, 330–350, and 356–376; these read SLVS…MFMP, VGAL…AAII, ILLL…VASF, ALMD…GIAM, LGIL…ALFG, LVVL…IIVF, VSIP…ITVL, VVAT…LLLI, and LFGI…IIGV.

This sequence belongs to the dicarboxylate/amino acid:cation symporter (DAACS) (TC 2.A.23) family.

It localises to the cell inner membrane. The catalysed reaction is L-serine(in) + Na(+)(in) = L-serine(out) + Na(+)(out). It catalyses the reaction L-threonine(in) + Na(+)(in) = L-threonine(out) + Na(+)(out). In terms of biological role, involved in the import of serine and threonine into the cell, with the concomitant import of sodium (symport system). This is Serine/threonine transporter SstT from Aeromonas salmonicida (strain A449).